Here is a 306-residue protein sequence, read N- to C-terminus: Ornithine carbamoyltransferase (306 aa).

Residues 51–54, Gln78, Arg102, and 129–132 each bind carbamoyl phosphate; these read STRT and HPCQ. Residues Asn160, Asp223, and 227–228 each bind L-ornithine; that span reads SM. Carbamoyl phosphate is bound by residues 263-264 and Arg291; that span reads CL.

This sequence belongs to the aspartate/ornithine carbamoyltransferase superfamily. OTCase family.

The protein localises to the cytoplasm. It catalyses the reaction carbamoyl phosphate + L-ornithine = L-citrulline + phosphate + H(+). It functions in the pathway amino-acid biosynthesis; L-arginine biosynthesis; L-arginine from L-ornithine and carbamoyl phosphate: step 1/3. In terms of biological role, reversibly catalyzes the transfer of the carbamoyl group from carbamoyl phosphate (CP) to the N(epsilon) atom of ornithine (ORN) to produce L-citrulline. This is Ornithine carbamoyltransferase from Trichormus variabilis (strain ATCC 29413 / PCC 7937) (Anabaena variabilis).